The primary structure comprises 354 residues: GTPase Obg (354 aa).

The region spanning 1–159 (MKFVDEVKIH…RDLVLELKLL (159 aa)) is the Obg domain. The OBG-type G domain occupies 160–333 (ADVGIVGYPN…LLDAVGRALF (174 aa)). GTP contacts are provided by residues 166 to 173 (GYPNAGKS), 191 to 195 (FTTLT), 212 to 215 (DIPG), 283 to 286 (TKID), and 314 to 316 (SAV). Residues Ser173 and Thr193 each coordinate Mg(2+).

This sequence belongs to the TRAFAC class OBG-HflX-like GTPase superfamily. OBG GTPase family. As to quaternary structure, monomer. Requires Mg(2+) as cofactor.

Its subcellular location is the cytoplasm. Its function is as follows. An essential GTPase which binds GTP, GDP and possibly (p)ppGpp with moderate affinity, with high nucleotide exchange rates and a fairly low GTP hydrolysis rate. Plays a role in control of the cell cycle, stress response, ribosome biogenesis and in those bacteria that undergo differentiation, in morphogenesis control. The chain is GTPase Obg from Anaeromyxobacter dehalogenans (strain 2CP-C).